The primary structure comprises 152 residues: Adenosine 5'-monophosphoramidase HNT1 (152 aa).

Residues 8 to 119 (IFCKIIKGEI…IPKKDEATGL (112 aa)) form the HIT domain. AMP-binding positions include 33–34 (DI), Asn-93, 99–101 (HQV), and 106–108 (HFH). Positions 104–108 (HVHFH) match the Histidine triad motif motif. His-106 acts as the Tele-AMP-histidine intermediate in catalysis.

The protein belongs to the HINT family. As to quaternary structure, homodimer. Mg(2+) is required as a cofactor.

The catalysed reaction is adenosine 5'-phosphoramidate + H2O = AMP + NH4(+). Its function is as follows. Hydrolyzes adenosine 5'-monophosphoramidate substrates such as AMP-morpholidate, AMP-N-alanine methyl ester, AMP-alpha-acetyl lysine methyl ester and AMP-NH2. The chain is Adenosine 5'-monophosphoramidase HNT1 from Candida albicans (strain SC5314 / ATCC MYA-2876) (Yeast).